Here is a 468-residue protein sequence, read N- to C-terminus: 3-isopropylmalate dehydratase large subunit (468 aa).

[4Fe-4S] cluster is bound by residues Cys347, Cys407, and Cys410.

The protein belongs to the aconitase/IPM isomerase family. LeuC type 1 subfamily. As to quaternary structure, heterodimer of LeuC and LeuD. It depends on [4Fe-4S] cluster as a cofactor.

The enzyme catalyses (2R,3S)-3-isopropylmalate = (2S)-2-isopropylmalate. It functions in the pathway amino-acid biosynthesis; L-leucine biosynthesis; L-leucine from 3-methyl-2-oxobutanoate: step 2/4. In terms of biological role, catalyzes the isomerization between 2-isopropylmalate and 3-isopropylmalate, via the formation of 2-isopropylmaleate. The chain is 3-isopropylmalate dehydratase large subunit from Synechocystis sp. (strain ATCC 27184 / PCC 6803 / Kazusa).